Here is a 409-residue protein sequence, read N- to C-terminus: NADH-quinone oxidoreductase subunit 4 (409 aa).

The protein belongs to the complex I 49 kDa subunit family. As to quaternary structure, NDH-1 is composed of 15 different subunits, Nqo1 to Nqo15. The complex has a L-shaped structure, with the hydrophobic arm (subunits Nqo7, Nqo8 and Nqo10 to Nqo14) embedded in the membrane and the hydrophilic peripheral arm (subunits Nqo1 to Nqo6, Nqo9 and Nqo15) protruding into the bacterial cytoplasm. The hydrophilic domain contains all the redox centers. This subunit interacts extensively with Nqo6.

It localises to the cell membrane. It catalyses the reaction a quinone + NADH + 5 H(+)(in) = a quinol + NAD(+) + 4 H(+)(out). NDH-1 shuttles electrons from NADH, via FMN and iron-sulfur (Fe-S) centers, to quinones in the respiratory chain. The immediate electron acceptor for the enzyme in this species is menaquinone. Couples the redox reaction to proton translocation (for every two electrons transferred, four hydrogen ions are translocated across the cytoplasmic membrane), and thus conserves the redox energy in a proton gradient required for the synthesis of ATP. The Nqo4 subunit may contain the quinone-binding site. This chain is NADH-quinone oxidoreductase subunit 4 (nqo4), found in Thermus thermophilus (strain ATCC 27634 / DSM 579 / HB8).